The primary structure comprises 79 residues: D-alanyl carrier protein (79 aa).

The region spanning 1–77 (MDVKAEVIEI…KIVEGVTELR (77 aa)) is the Carrier domain. At Ser35 the chain carries O-(pantetheine 4'-phosphoryl)serine.

It belongs to the DltC family. 4'-phosphopantetheine is transferred from CoA to a specific serine of apo-DCP.

The protein localises to the cytoplasm. It functions in the pathway cell wall biogenesis; lipoteichoic acid biosynthesis. Carrier protein involved in the D-alanylation of lipoteichoic acid (LTA). The loading of thioester-linked D-alanine onto DltC is catalyzed by D-alanine--D-alanyl carrier protein ligase DltA. The DltC-carried D-alanyl group is further transferred to cell membrane phosphatidylglycerol (PG) by forming an ester bond, probably catalyzed by DltD. D-alanylation of LTA plays an important role in modulating the properties of the cell wall in Gram-positive bacteria, influencing the net charge of the cell wall. The protein is D-alanyl carrier protein of Streptococcus gordonii (strain Challis / ATCC 35105 / BCRC 15272 / CH1 / DL1 / V288).